Consider the following 37-residue polypeptide: Conotoxin Bt1.8 (37 aa).

Residues 1-20 (PDGRNAAAKAFDLITPTVRK) constitute a propeptide that is removed on maturation. Disulfide bonds link C22–C28 and C23–C36. C36 is modified (cysteine amide).

The protein belongs to the conotoxin A superfamily. In terms of tissue distribution, expressed by the venom duct.

The protein resides in the secreted. In terms of biological role, alpha-conotoxins bind to the nicotinic acetylcholine receptors (nAChR) and inhibit them. This toxin inhibits mammalian alpha-3-beta-2/CHRNA3-CHRNB2 nAChR (IC(50)=9.4 nM (rat), IC(50)=8.8 nM (human)), as well as the subunit chimera alpha-6/alpha-3-beta-2-beta-3 nAChR (CHRNA6/CHRNA3-CHRNB2-CHRNB3)(IC(50)=2.1 nM (rat), IC(50)=1.7 nM (human)). Binds to rat alpha-6/alpha-3-beta-2-beta-3 more rapidly than to alpha-3-beta-2, and dissociates more rapidly from alpha-3-beta-2 than from alpha-6/alpha-3-beta-2-beta-3. The polypeptide is Conotoxin Bt1.8 (Conus betulinus (Beech cone)).